The chain runs to 80 residues: uncharacterized protein (80 aa).

The protein to M.leprae U650M.

This is an uncharacterized protein from Mycobacterium bovis (strain ATCC BAA-935 / AF2122/97).